A 165-amino-acid chain; its full sequence is UPF0262 protein blr1257 (165 aa).

This sequence belongs to the UPF0262 family.

This Bradyrhizobium diazoefficiens (strain JCM 10833 / BCRC 13528 / IAM 13628 / NBRC 14792 / USDA 110) protein is UPF0262 protein blr1257.